Here is a 652-residue protein sequence, read N- to C-terminus: tRNA 5-methylaminomethyl-2-thiouridine biosynthesis bifunctional protein MnmC (652 aa).

Positions 1-235 (MPDRLVPATL…EPALRVGEYA (235 aa)) are tRNA (mnm(5)s(2)U34)-methyltransferase. The tract at residues 259–652 (IGAGLAGCAV…IRALRGRQIG (394 aa)) is FAD-dependent cmnm(5)s(2)U34 oxidoreductase.

The protein in the N-terminal section; belongs to the methyltransferase superfamily. tRNA (mnm(5)s(2)U34)-methyltransferase family. This sequence in the C-terminal section; belongs to the DAO family. FAD is required as a cofactor.

The protein resides in the cytoplasm. It carries out the reaction 5-aminomethyl-2-thiouridine(34) in tRNA + S-adenosyl-L-methionine = 5-methylaminomethyl-2-thiouridine(34) in tRNA + S-adenosyl-L-homocysteine + H(+). Functionally, catalyzes the last two steps in the biosynthesis of 5-methylaminomethyl-2-thiouridine (mnm(5)s(2)U) at the wobble position (U34) in tRNA. Catalyzes the FAD-dependent demodification of cmnm(5)s(2)U34 to nm(5)s(2)U34, followed by the transfer of a methyl group from S-adenosyl-L-methionine to nm(5)s(2)U34, to form mnm(5)s(2)U34. The sequence is that of tRNA 5-methylaminomethyl-2-thiouridine biosynthesis bifunctional protein MnmC from Burkholderia ambifaria (strain ATCC BAA-244 / DSM 16087 / CCUG 44356 / LMG 19182 / AMMD) (Burkholderia cepacia (strain AMMD)).